Consider the following 414-residue polypeptide: Putative competence-damage inducible protein (414 aa).

The protein belongs to the CinA family.

This Listeria monocytogenes serovar 1/2a (strain ATCC BAA-679 / EGD-e) protein is Putative competence-damage inducible protein.